The following is a 288-amino-acid chain: Homoserine kinase (288 aa).

79–89 provides a ligand contact to ATP; that stretch reads PLARGLGSSSS.

Belongs to the GHMP kinase family. Homoserine kinase subfamily.

The protein localises to the cytoplasm. It carries out the reaction L-homoserine + ATP = O-phospho-L-homoserine + ADP + H(+). It functions in the pathway amino-acid biosynthesis; L-threonine biosynthesis; L-threonine from L-aspartate: step 4/5. Its function is as follows. Catalyzes the ATP-dependent phosphorylation of L-homoserine to L-homoserine phosphate. This chain is Homoserine kinase, found in Streptococcus sanguinis (strain SK36).